Consider the following 140-residue polypeptide: Probable transport accessory protein MmpS4 (140 aa).

A helical transmembrane segment spans residues 2 to 22; that stretch reads LMRTWIPLVILVVVIVGGFTV.

It belongs to the MmpS family.

The protein localises to the cell membrane. This Mycobacterium bovis (strain ATCC BAA-935 / AF2122/97) protein is Probable transport accessory protein MmpS4 (mmpS4).